The sequence spans 243 residues: Adenylate dimethylallyltransferase (243 aa).

The enzyme catalyses dimethylallyl diphosphate + AMP = N(6)-(dimethylallyl)adenosine 5'-phosphate + diphosphate. Transfers dimethylallyl groups to AMP as part of the biosynthesis of cytokinin phytohormones. This is Adenylate dimethylallyltransferase (tzs) from Agrobacterium fabrum (strain C58 / ATCC 33970) (Agrobacterium tumefaciens (strain C58)).